The primary structure comprises 101 residues: Small ribosomal subunit protein uS14 (101 aa).

It belongs to the universal ribosomal protein uS14 family. As to quaternary structure, part of the 30S ribosomal subunit. Contacts proteins S3 and S10.

Functionally, binds 16S rRNA, required for the assembly of 30S particles and may also be responsible for determining the conformation of the 16S rRNA at the A site. This is Small ribosomal subunit protein uS14 from Shewanella sediminis (strain HAW-EB3).